The following is a 155-amino-acid chain: Glutamyl-tRNA(Gln) amidotransferase subunit C, chloroplastic/mitochondrial (155 aa).

The transit peptide at 1 to 52 (MATRALLAVIYASPNRCYISPSRIKIQSLTCSSSSHYYQRQSRKNHRIARSY) directs the protein to the chloroplast and mitochondrion.

It belongs to the GatC family. Subunit of the heterotrimeric GatCAB amidotransferase (AdT) complex, composed of A, B and C subunits.

The protein resides in the mitochondrion. Its subcellular location is the plastid. It localises to the chloroplast. It catalyses the reaction L-glutamyl-tRNA(Gln) + L-glutamine + ATP + H2O = L-glutaminyl-tRNA(Gln) + L-glutamate + ADP + phosphate + H(+). Its function is as follows. Allows the formation of correctly charged Gln-tRNA(Gln) through the transamidation of misacylated Glu-tRNA(Gln) in chloroplasts and mitochondria. The reaction takes place in the presence of glutamine and ATP through an activated gamma-phospho-Glu-tRNA(Gln). The chain is Glutamyl-tRNA(Gln) amidotransferase subunit C, chloroplastic/mitochondrial from Arabidopsis thaliana (Mouse-ear cress).